The sequence spans 276 residues: MLERVAVLYNPLSDASIKLSRELADWLVERGVKTTRGVSQEFRDQPHLVADCDLMIALGGDGTVLRAARLCFPHNIPVLPVALGHLSFMAEIGPDEVYSGCEQIMNGGGWFDERSLVRAQLWRGGQKLSQHTALNEVVISRSDLSRIVNVHVTIDDSPLTTYHADGVIVATATGSTAYALAAGGPIVDPRSQALVLVPIAAHLTNIPSMVLHEDAVVTMQLRSRHHALLAVDGRENIDLIEGDEVVVRRSPQVCTFVRLRPSNQFYTQLVARLRRS.

Catalysis depends on Asp61, which acts as the Proton acceptor. NAD(+)-binding positions include 61-62 (DG), Arg66, 135-136 (NE), Arg146, His163, Asp165, and Ala200.

It belongs to the NAD kinase family. It depends on a divalent metal cation as a cofactor.

It is found in the cytoplasm. It catalyses the reaction NAD(+) + ATP = ADP + NADP(+) + H(+). Functionally, involved in the regulation of the intracellular balance of NAD and NADP, and is a key enzyme in the biosynthesis of NADP. Catalyzes specifically the phosphorylation on 2'-hydroxyl of the adenosine moiety of NAD to yield NADP. In Chloroflexus aurantiacus (strain ATCC 29366 / DSM 635 / J-10-fl), this protein is NAD kinase.